Consider the following 292-residue polypeptide: MFTGSLVAIVTPMLEDGALDLDRFCALIDFHIEQKTDGIVVVGTTGESPTVDFDEHHLLIRTAVTHAAGRIPVIAGTGANSTREAIELTVFSKNAGADACLSVAPYYNKPTQEGLYQHFKAIAEAVDIPMILYNVPGRTVVDISNDTALRLAQIPGIVGIKDATGNIARGCDLLQRVPDNFAVYSGDDATALALLLLGGHGTISVTANVAPRLMHEMCTAAFAGDLARAREINTRLFRLHIDLFVEANPIPVKWAVARMGLINDSLRLPLTALSSQYHELIRKAMLQAGITV.

T45 contributes to the pyruvate binding site. The active-site Proton donor/acceptor is Y133. The active-site Schiff-base intermediate with substrate is the K161. I203 provides a ligand contact to pyruvate.

Belongs to the DapA family. As to quaternary structure, homotetramer; dimer of dimers.

It is found in the cytoplasm. It carries out the reaction L-aspartate 4-semialdehyde + pyruvate = (2S,4S)-4-hydroxy-2,3,4,5-tetrahydrodipicolinate + H2O + H(+). It functions in the pathway amino-acid biosynthesis; L-lysine biosynthesis via DAP pathway; (S)-tetrahydrodipicolinate from L-aspartate: step 3/4. Functionally, catalyzes the condensation of (S)-aspartate-beta-semialdehyde [(S)-ASA] and pyruvate to 4-hydroxy-tetrahydrodipicolinate (HTPA). The polypeptide is 4-hydroxy-tetrahydrodipicolinate synthase (Nitrosomonas europaea (strain ATCC 19718 / CIP 103999 / KCTC 2705 / NBRC 14298)).